A 208-amino-acid polypeptide reads, in one-letter code: Molybdenum cofactor guanylyltransferase (208 aa).

GTP is bound by residues 10–12 (LAG), K23, D69, and D103. Mg(2+) is bound at residue D103.

It belongs to the MobA family. In terms of assembly, monomer. The cofactor is Mg(2+).

It localises to the cytoplasm. It carries out the reaction Mo-molybdopterin + GTP + H(+) = Mo-molybdopterin guanine dinucleotide + diphosphate. Functionally, transfers a GMP moiety from GTP to Mo-molybdopterin (Mo-MPT) cofactor (Moco or molybdenum cofactor) to form Mo-molybdopterin guanine dinucleotide (Mo-MGD) cofactor. The sequence is that of Molybdenum cofactor guanylyltransferase from Mesorhizobium japonicum (strain LMG 29417 / CECT 9101 / MAFF 303099) (Mesorhizobium loti (strain MAFF 303099)).